The primary structure comprises 309 residues: uncharacterized protein (309 aa).

Positions 1-60 (MKPLLDVLMILDALEKEGSFAAASAKLYKTPSALSYTVHKLESDLNIQLLDRSGHRAKFT) constitute an HTH lysR-type domain. Positions 20 to 39 (FAAASAKLYKTPSALSYTVH) form a DNA-binding region, H-T-H motif.

This sequence belongs to the LysR transcriptional regulatory family.

This is an uncharacterized protein from Escherichia coli (strain K12).